We begin with the raw amino-acid sequence, 338 residues long: CRISPR-associated endonuclease Cas1 (338 aa).

Positions 155, 220, and 235 each coordinate Mn(2+).

This sequence belongs to the CRISPR-associated endonuclease Cas1 family. As to quaternary structure, homodimer, forms a heterotetramer with a Cas2 homodimer. Mg(2+) serves as cofactor. The cofactor is Mn(2+).

Its function is as follows. CRISPR (clustered regularly interspaced short palindromic repeat), is an adaptive immune system that provides protection against mobile genetic elements (viruses, transposable elements and conjugative plasmids). CRISPR clusters contain spacers, sequences complementary to antecedent mobile elements, and target invading nucleic acids. CRISPR clusters are transcribed and processed into CRISPR RNA (crRNA). Acts as a dsDNA endonuclease. Involved in the integration of spacer DNA into the CRISPR cassette. The type III-A Csm effector complex binds crRNA and acts as a crRNA-guided RNase, DNase and cyclic oligoadenylate synthase; binding of target RNA cognate to the crRNA is required for all activities. In Mycobacterium tuberculosis (strain CDC 1551 / Oshkosh), this protein is CRISPR-associated endonuclease Cas1.